The primary structure comprises 298 residues: Pantothenate synthetase (298 aa).

Residue 30-37 participates in ATP binding; sequence MGNLHEGH. Catalysis depends on His-37, which acts as the Proton donor. Gln-61 is a (R)-pantoate binding site. Gln-61 provides a ligand contact to beta-alanine. Position 149-152 (149-152) interacts with ATP; that stretch reads GEKD. Position 155 (Gln-155) interacts with (R)-pantoate. Residues Val-178 and 186–189 contribute to the ATP site; that span reads MSSR.

It belongs to the pantothenate synthetase family. As to quaternary structure, homodimer.

It localises to the cytoplasm. It carries out the reaction (R)-pantoate + beta-alanine + ATP = (R)-pantothenate + AMP + diphosphate + H(+). It functions in the pathway cofactor biosynthesis; (R)-pantothenate biosynthesis; (R)-pantothenate from (R)-pantoate and beta-alanine: step 1/1. Catalyzes the condensation of pantoate with beta-alanine in an ATP-dependent reaction via a pantoyl-adenylate intermediate. The sequence is that of Pantothenate synthetase from Aliivibrio salmonicida (strain LFI1238) (Vibrio salmonicida (strain LFI1238)).